Consider the following 148-residue polypeptide: UPF0260 protein YE2365 (148 aa).

The protein belongs to the UPF0260 family.

The protein is UPF0260 protein YE2365 of Yersinia enterocolitica serotype O:8 / biotype 1B (strain NCTC 13174 / 8081).